Here is a 343-residue protein sequence, read N- to C-terminus: tRNA N6-adenosine threonylcarbamoyltransferase (343 aa).

Positions 120 and 124 each coordinate Fe cation. Residues 142-146, Asp175, Gly188, Asp192, and Asn281 contribute to the substrate site; that span reads VVSGG. Asp310 contributes to the Fe cation binding site.

It belongs to the KAE1 / TsaD family. The cofactor is Fe(2+).

The protein localises to the cytoplasm. The catalysed reaction is L-threonylcarbamoyladenylate + adenosine(37) in tRNA = N(6)-L-threonylcarbamoyladenosine(37) in tRNA + AMP + H(+). Required for the formation of a threonylcarbamoyl group on adenosine at position 37 (t(6)A37) in tRNAs that read codons beginning with adenine. Is involved in the transfer of the threonylcarbamoyl moiety of threonylcarbamoyl-AMP (TC-AMP) to the N6 group of A37, together with TsaE and TsaB. TsaD likely plays a direct catalytic role in this reaction. The polypeptide is tRNA N6-adenosine threonylcarbamoyltransferase (Bacillus cereus (strain ATCC 10987 / NRS 248)).